Consider the following 294-residue polypeptide: MRPSLDSYAHLAGGKVRDLYTIDDEHLLLVASDRISAYDHVLSTPIPDKGRVLTAMSVFFFGVLGGNNHLAGEPDDSRIPEEVLGRALVVRKLNMVPVECVARGYLTGSGLIDYNETGAVCGVALPEGLVEASQLPDPIFTPARKAELGEHDENISFEAVVEKVGQDLAVKLRDDTLDVYGRASNFAADRGIILADTKLEFGLDAQNNLILADEVLTPDSSRYWPADGYEAGKVQPSFDKQFVRNWLTGPESGWDRASDTPPPPLPAEIVEATRARYIEAYERISGLSFADWVG.

Belongs to the SAICAR synthetase family.

It catalyses the reaction 5-amino-1-(5-phospho-D-ribosyl)imidazole-4-carboxylate + L-aspartate + ATP = (2S)-2-[5-amino-1-(5-phospho-beta-D-ribosyl)imidazole-4-carboxamido]succinate + ADP + phosphate + 2 H(+). Its pathway is purine metabolism; IMP biosynthesis via de novo pathway; 5-amino-1-(5-phospho-D-ribosyl)imidazole-4-carboxamide from 5-amino-1-(5-phospho-D-ribosyl)imidazole-4-carboxylate: step 1/2. The protein is Phosphoribosylaminoimidazole-succinocarboxamide synthase of Rhodococcus opacus (strain B4).